The primary structure comprises 231 residues: L-ribulose-5-phosphate 4-epimerase SgbE (231 aa).

Substrate-binding positions include 27-28, 44-45, and 74-75; these read GN, SG, and SS. Zn(2+) contacts are provided by aspartate 76, histidine 95, and histidine 97. Aspartate 120 acts as the Proton donor/acceptor in catalysis. Histidine 171 provides a ligand contact to Zn(2+). Tyrosine 229 functions as the Proton donor/acceptor in the catalytic mechanism.

The protein belongs to the aldolase class II family. AraD/FucA subfamily. Zn(2+) serves as cofactor.

It carries out the reaction L-ribulose 5-phosphate = D-xylulose 5-phosphate. Functionally, catalyzes the interconversion of L-ribulose 5-phosphate (LRu5P) and D-xylulose 5-phosphate (D-Xu5P) via a retroaldol/aldol mechanism (carbon-carbon bond cleavage analogous to a class II aldolase reaction). May be involved in the utilization of 2,3-diketo-L-gulonate. This is L-ribulose-5-phosphate 4-epimerase SgbE from Escherichia coli (strain K12).